The primary structure comprises 446 residues: Tripartite motif-containing protein 43C (446 aa).

Residues 16 to 57 form an RING-type zinc finger; that stretch reads CSICQGIFMDPVYLRCGHKFCETCLLLFQEDIKFPAYCPTCR. The segment at 88-129 adopts a B box-type zinc-finger fold; that stretch reads SEEHKCVTHKAKKMIFCDKSKILLCHLCSDSQEHSGHTHCSI. Positions 93, 96, 115, and 121 each coordinate Zn(2+). The region spanning 271–446 is the B30.2/SPRY domain; sequence RLRAHSIPGL…VRPFFFAAYT (176 aa).

Belongs to the TRIM/RBCC family.

The protein is Tripartite motif-containing protein 43C of Mus musculus (Mouse).